The following is a 140-amino-acid chain: Ribosomal RNA large subunit methyltransferase H (140 aa).

S-adenosyl-L-methionine-binding positions include L58, G90, and 108 to 113; that span reads LSLLTF.

It belongs to the RNA methyltransferase RlmH family. Homodimer.

It localises to the cytoplasm. The catalysed reaction is pseudouridine(1915) in 23S rRNA + S-adenosyl-L-methionine = N(3)-methylpseudouridine(1915) in 23S rRNA + S-adenosyl-L-homocysteine + H(+). Specifically methylates the pseudouridine at position 1915 (m3Psi1915) in 23S rRNA. The protein is Ribosomal RNA large subunit methyltransferase H of Protochlamydia amoebophila (strain UWE25).